A 562-amino-acid polypeptide reads, in one-letter code: Putative transport protein ETA_21820 (562 aa).

5 consecutive transmembrane segments (helical) span residues 8 to 28 (LLIGNHILLLFVVLALGLCLG), 32 to 52 (LGSVQLGNSIGVLVVSLLLGQ), 66 to 86 (FMLFIFCVGVEAGPNFFSIFF), 94 to 114 (MLAIVMVSSAMVLALGLGKLF), and 158 to 178 (HLSLGYALTYLVGLVSLIFGA). 2 consecutive RCK C-terminal domains span residues 202 to 288 (LDPD…SFRN) and 290 to 373 (KEVF…RIGF). 6 consecutive transmembrane segments (helical) span residues 383–403 (LLAFCAFFILGLMIGMITFQF), 406–426 (FNFGIGNAAGLLFAGIMLGFL), 440–460 (ALTMVKEFGLMVFMAGVGLSA), 473–493 (LLMLGAGLIVSLVPVVICFLF), 503–523 (ALLFGAIMGARTCAPAMEIIS), and 540–560 (AIANVLLTLAGTLIVIIWPIL).

This sequence belongs to the AAE transporter (TC 2.A.81) family. YbjL subfamily.

It is found in the cell membrane. The chain is Putative transport protein ETA_21820 from Erwinia tasmaniensis (strain DSM 17950 / CFBP 7177 / CIP 109463 / NCPPB 4357 / Et1/99).